The sequence spans 424 residues: Serpin E3 (424 aa).

Residues Met-1 to Gly-20 form the signal peptide. Residue Asn-46 is glycosylated (N-linked (GlcNAc...) asparagine). A disordered region spans residues Asp-143–Trp-174. Residues Glu-146 to Gly-157 are compositionally biased toward polar residues. Residues Ala-163 to Gly-173 are compositionally biased toward gly residues.

This sequence belongs to the serpin family.

Its subcellular location is the secreted. Probable serine protease inhibitor. The sequence is that of Serpin E3 (SERPINE3) from Homo sapiens (Human).